Reading from the N-terminus, the 321-residue chain is Ribose-phosphate pyrophosphokinase (321 aa).

Residues 44–46 and 103–104 contribute to the ATP site; these read DGE and RQ. 2 residues coordinate Mg(2+): H137 and D179. K202 is an active-site residue. D-ribose 5-phosphate contacts are provided by residues R204, D228, and 232–236; that span reads DTAGT.

This sequence belongs to the ribose-phosphate pyrophosphokinase family. Class I subfamily. Homohexamer. It depends on Mg(2+) as a cofactor.

The protein resides in the cytoplasm. It catalyses the reaction D-ribose 5-phosphate + ATP = 5-phospho-alpha-D-ribose 1-diphosphate + AMP + H(+). It participates in metabolic intermediate biosynthesis; 5-phospho-alpha-D-ribose 1-diphosphate biosynthesis; 5-phospho-alpha-D-ribose 1-diphosphate from D-ribose 5-phosphate (route I): step 1/1. Its function is as follows. Involved in the biosynthesis of the central metabolite phospho-alpha-D-ribosyl-1-pyrophosphate (PRPP) via the transfer of pyrophosphoryl group from ATP to 1-hydroxyl of ribose-5-phosphate (Rib-5-P). The sequence is that of Ribose-phosphate pyrophosphokinase from Staphylococcus epidermidis (strain ATCC 35984 / DSM 28319 / BCRC 17069 / CCUG 31568 / BM 3577 / RP62A).